Consider the following 918-residue polypeptide: Band 3 anion exchange protein (918 aa).

The segment at 1-48 (MENDLSFGEDVMSYEEESDSAFPSPIRPTPPGHSGNYDLEQSRQEEDS) is disordered. The Cytoplasmic segment spans residues 1–392 (MENDLSFGED…ISDFTDALDP (392 aa)). Residues 393-416 (QVLAAVIFIYFAALSPAITFGGLL) traverse the membrane as a helical segment. Residues 417 to 424 (ADKTEHMM) are Extracellular-facing. Residues 425–445 (GVSELMISTCVQGIIFAFIAA) traverse the membrane as a helical segment. Topologically, residues 446–448 (QPT) are cytoplasmic. The discontinuously helical transmembrane segment at 449–465 (LVIGFSGPLLVFEEAFF) threads the bilayer. The Extracellular portion of the chain corresponds to 466-474 (AFCKSQEIE). Residues 475–495 (YIVGRIWVGLWLVIIVVVIVA) traverse the membrane as a helical segment. Topologically, residues 496 to 507 (VEGSFLVKFISR) are cytoplasmic. A helical transmembrane segment spans residues 508-530 (FTQEIFSILISLIFIYETFSKLG). The Extracellular segment spans residues 531–583 (KIFKAHPLVLNYEHLNDSLDNPFHPVVKEHIEYHEDGNKTVHEVIHERAYPNT). Residues N546 and N568 are each glycosylated (N-linked (GlcNAc...) asparagine). Residues 584-604 (ALLSMCLMFGCFFIAYFLRQF) form a helical membrane-spanning segment. The Cytoplasmic segment spans residues 605-615 (KNGHFLPGPIR). A helical transmembrane segment spans residues 616-636 (RMIGDFGVPIAIFFMIAVDIT). At 637–676 (IEDAYTQKLVVPKGLMVSNPNARGWFINPLGEKKPFPAWM) the chain is on the extracellular side. Residues 677–697 (MGACCVPALLVFILIFLESQI) form a helical membrane-spanning segment. The Cytoplasmic segment spans residues 698–713 (TTLIVSKPERKMVKGS). Residues 714–732 (GFHLDLLILVTMGGIASLF) traverse the membrane as a helical segment. Residues 733 to 750 (GVPWLSAATVRSVTHANA) form a discontinuously helical membrane-spanning segment. At 751-769 (LTVMSKGPKPEIEKVLEQR) the chain is on the cytoplasmic side. 2 consecutive transmembrane segments (helical) span residues 770 to 790 (ISGM…PILK) and 791 to 809 (MIPM…ITSL). Residues 810 to 847 (SGIQMWDRMLLLIVPRKYYPADAYAQRVTTMKMHLFTL) lie on the Cytoplasmic side of the membrane. Positions 848-878 (IQMVCLGALWMVKMSAFSLALPFVLILTIPL) form an intramembrane region, discontinuously helical. C852 is lipidated: S-palmitoyl cysteine. At 879–918 (RMAITGTLFTDKEMKCLDASDGKVKFEEEPGEDMYESPLP) the chain is on the cytoplasmic side.

This sequence belongs to the anion exchanger (TC 2.A.31) family. As to quaternary structure, a dimer in solution, it spans the membrane asymmetrically and appears to be tetrameric.

The protein localises to the cell membrane. The enzyme catalyses hydrogencarbonate(in) + chloride(out) = hydrogencarbonate(out) + chloride(in). Functions both as a transporter that mediates electroneutral anion exchange across the cell membrane and as a structural protein. Major integral membrane glycoprotein of the erythrocyte membrane; required for normal flexibility and stability of the erythrocyte membrane and for normal erythrocyte shape via the interactions of its cytoplasmic domain with cytoskeletal proteins, glycolytic enzymes, and hemoglobin. Functions as a transporter that mediates the 1:1 exchange of inorganic anions across the erythrocyte membrane. Mediates chloride-bicarbonate exchange in the kidney, and is required for normal acidification of the urine. This chain is Band 3 anion exchange protein (slc4a1), found in Oncorhynchus mykiss (Rainbow trout).